Reading from the N-terminus, the 219-residue chain is Guanylate kinase (219 aa).

A Guanylate kinase-like domain is found at 15–194 (GLMFVLSSPS…AFAEVQSILK (180 aa)). Position 22-29 (22-29 (SPSGAGKT)) interacts with ATP.

Belongs to the guanylate kinase family.

The protein localises to the cytoplasm. It catalyses the reaction GMP + ATP = GDP + ADP. In terms of biological role, essential for recycling GMP and indirectly, cGMP. This Bradyrhizobium diazoefficiens (strain JCM 10833 / BCRC 13528 / IAM 13628 / NBRC 14792 / USDA 110) protein is Guanylate kinase.